Consider the following 341-residue polypeptide: UDP-3-O-acylglucosamine N-acyltransferase (341 aa).

Histidine 241 functions as the Proton acceptor in the catalytic mechanism.

This sequence belongs to the transferase hexapeptide repeat family. LpxD subfamily. As to quaternary structure, homotrimer.

It carries out the reaction a UDP-3-O-[(3R)-3-hydroxyacyl]-alpha-D-glucosamine + a (3R)-hydroxyacyl-[ACP] = a UDP-2-N,3-O-bis[(3R)-3-hydroxyacyl]-alpha-D-glucosamine + holo-[ACP] + H(+). It functions in the pathway bacterial outer membrane biogenesis; LPS lipid A biosynthesis. In terms of biological role, catalyzes the N-acylation of UDP-3-O-acylglucosamine using 3-hydroxyacyl-ACP as the acyl donor. Is involved in the biosynthesis of lipid A, a phosphorylated glycolipid that anchors the lipopolysaccharide to the outer membrane of the cell. The polypeptide is UDP-3-O-acylglucosamine N-acyltransferase (Haemophilus ducreyi (strain 35000HP / ATCC 700724)).